The chain runs to 368 residues: MNTLHPHKQQQEQAQQQEEARYEWDLSLSTVVSSSSSSASDVIGAIEFDPTDNIVATAGISRKIRFYGLPSLLRNNAVSGTGVSFVDQATACEYYICTPAKLSSLRWRPGSGGRVIGSGDYDGVVMEYDLEKRTPVFERDEHGGRRVWSVDYTRHGGASTVGASGSDDGTMQVWDPRCPPEESVGVVRPAGICRSAVCCVEFDPSGGPAVAVGCADRKGYVYDIRKLVDPALTLQGHTKTVSYVRFLDGGTVVTAGTDGCLKLWSVEDGRVIRTYEGHVNNRNFVGLSVWRNGALFGCGSENNRVFVYDRRWGKPVWVDGFEPVGMNSGSDKRFVSSVCWRQSGVDQCTLVAGGSDGVLQVYVGKRKP.

7 WD repeats span residues 38–77 (SASD…RNNA), 97–138 (CTPA…PVFE), 141–184 (EHGG…EESV), 192–232 (ICRS…DPAL), 236–276 (GHTK…RTYE), 279–318 (VNNR…PVWV), and 330–368 (SDKR…KRKP).

As to quaternary structure, interacts with UVR8.

The protein localises to the nucleus. It is found in the cytoplasm. Its subcellular location is the cytosol. Functions in association with RUP1 as repressor of UV-B-induced photomorphogenesis mediated by UVR8 and HY5. Plays a crucial negative feedback regulatory role downstream of UVR8-COP1 to inhibit UVR8 function, balance UV-B-specific responses and ensure normal plant growth. Is involved in the regulation of photoperiodic flowering and vegetative development. May act as negative regulator of photoperiodic flowering by suppressing flowering through the action of CONSTANS (CO) and FLOWERING LOCUS T (FT). The sequence is that of WD repeat-containing protein RUP2 (RUP2) from Arabidopsis thaliana (Mouse-ear cress).